The following is a 289-amino-acid chain: Ribonuclease Z (289 aa).

Zn(2+) contacts are provided by H63, H65, D67, H68, H143, D197, and H255. Residue D67 is the Proton acceptor of the active site.

It belongs to the RNase Z family. Homodimer. The cofactor is Zn(2+).

It catalyses the reaction Endonucleolytic cleavage of RNA, removing extra 3' nucleotides from tRNA precursor, generating 3' termini of tRNAs. A 3'-hydroxy group is left at the tRNA terminus and a 5'-phosphoryl group is left at the trailer molecule.. Its function is as follows. Zinc phosphodiesterase, which displays some tRNA 3'-processing endonuclease activity. Probably involved in tRNA maturation, by removing a 3'-trailer from precursor tRNA. In Azobacteroides pseudotrichonymphae genomovar. CFP2, this protein is Ribonuclease Z.